Consider the following 81-residue polypeptide: MATLRIRLQVPKKYRDQPLMGDVLASCQLQFNILAAHLGPNREEDGWFDVMLTGTSEDITAALAVLRDRDIELWSDTEDEF.

It to Synechocystis PCC 6803 ssr2439.

Its function is as follows. May have a regulatory function. This is an uncharacterized protein from Synechococcus elongatus (strain ATCC 33912 / PCC 7942 / FACHB-805) (Anacystis nidulans R2).